The primary structure comprises 432 residues: Mitochondrial distribution and morphology protein 12 (432 aa).

An SMP-LTD domain is found at 1-432; the sequence is MSIEVDWRAA…VFPSFWTFLI (432 aa). Disordered regions lie at residues 182–273 and 354–377; these read WTDP…PRMR and QQEA…PKRQ. The segment covering 214–234 has biased composition (low complexity); that stretch reads TSNPTSRPSTSSTLPSHPSAS. 2 stretches are compositionally biased toward basic and acidic residues: residues 243-253 and 355-364; these read TGKEHGSLAED and QEARGQDDRP.

Belongs to the MDM12 family. As to quaternary structure, component of the ER-mitochondria encounter structure (ERMES) or MDM complex, composed of mmm1, mdm10, mdm12 and mdm34. A mmm1 homodimer associates with one molecule of mdm12 on each side in a pairwise head-to-tail manner, and the SMP-LTD domains of mmm1 and mdm12 generate a continuous hydrophobic tunnel for phospholipid trafficking.

The protein resides in the mitochondrion outer membrane. Its subcellular location is the endoplasmic reticulum membrane. Its function is as follows. Component of the ERMES/MDM complex, which serves as a molecular tether to connect the endoplasmic reticulum (ER) and mitochondria. Components of this complex are involved in the control of mitochondrial shape and protein biogenesis, and function in nonvesicular lipid trafficking between the ER and mitochondria. Mdm12 is required for the interaction of the ER-resident membrane protein MMM1 and the outer mitochondrial membrane-resident beta-barrel protein mdm10. The mdm12-mmm1 subcomplex functions in the major beta-barrel assembly pathway that is responsible for biogenesis of all mitochondrial outer membrane beta-barrel proteins, and acts in a late step after the SAM complex. The mdm10-mdm12-mmm1 subcomplex further acts in the TOM40-specific pathway after the action of the mdm12-mmm1 complex. Essential for establishing and maintaining the structure of mitochondria and maintenance of mtDNA nucleoids. The polypeptide is Mitochondrial distribution and morphology protein 12 (Aspergillus flavus (strain ATCC 200026 / FGSC A1120 / IAM 13836 / NRRL 3357 / JCM 12722 / SRRC 167)).